A 174-amino-acid polypeptide reads, in one-letter code: Superoxide dismutase [Cu-Zn] (174 aa).

An N-terminal signal peptide occupies residues 1–20 (MMKSLFIASTMVLMAFPAFA). Residues H68, H70, and H93 each contribute to the Cu cation site. An intrachain disulfide couples C75 to C170. H93, H102, H110, and D113 together coordinate Zn(2+). H148 is a Cu cation binding site.

Belongs to the Cu-Zn superoxide dismutase family. Homodimer. Requires Cu cation as cofactor. Zn(2+) serves as cofactor.

The protein resides in the periplasm. The catalysed reaction is 2 superoxide + 2 H(+) = H2O2 + O2. Functionally, destroys radicals which are normally produced within the cells and which are toxic to biological systems. The protein is Superoxide dismutase [Cu-Zn] (sodC) of Brucella melitensis biotype 1 (strain ATCC 23456 / CCUG 17765 / NCTC 10094 / 16M).